Reading from the N-terminus, the 647-residue chain is Starch synthase 1, chloroplastic/amyloplastic (647 aa).

The transit peptide at 1–41 (MAATGVGAGCLAPSVRLRADPATAARASACVVRARLRRVAR) directs the protein to the chloroplast. Residues 66 to 91 (PLVPGFLAPPPPAPAQSPAPTQPPLP) are compositionally biased toward pro residues. Residues 66-95 (PLVPGFLAPPPPAPAQSPAPTQPPLPDAGV) form a disordered region. Residue Lys-153 participates in ADP-alpha-D-glucose binding.

Belongs to the glycosyltransferase 1 family. Bacterial/plant glycogen synthase subfamily.

It is found in the plastid. Its subcellular location is the chloroplast. It localises to the amyloplast. The catalysed reaction is [(1-&gt;4)-alpha-D-glucosyl](n) + ADP-alpha-D-glucose = [(1-&gt;4)-alpha-D-glucosyl](n+1) + ADP + H(+). Its pathway is glycan biosynthesis; starch biosynthesis. The polypeptide is Starch synthase 1, chloroplastic/amyloplastic (WSSI-2) (Triticum aestivum (Wheat)).